We begin with the raw amino-acid sequence, 232 residues long: Vesicle transport through interaction with t-SNAREs homolog 1B (232 aa).

An N-acetylalanine modification is found at Ala-2. Interaction with CLINT1 stretches follow at residues 2-23 (ASSA…GLHE) and 69-73 (APLSF). Topologically, residues 2 to 208 (ASSAASSEHF…SRKVTTNKLL (207 aa)) are cytoplasmic. The stretch at 35–98 (TAGTEEKKKL…AKLHREVRST (64 aa)) forms a coiled coil. The residue at position 103 (Thr-103) is a Phosphothreonine. At Arg-107 the chain carries Omega-N-methylarginine. The residue at position 138 (Ser-138) is a Phosphoserine. Positions 161-198 (SEIIEELGEQRDQLERTKSRLVNTSENLSKSRKILRSM) form a coiled coil. Residues 209–229 (LSIIILLELAILGGLVYYKFF) form a helical; Anchor for type IV membrane protein membrane-spanning segment. At 230 to 232 (RSH) the chain is on the vesicular side.

It belongs to the VTI1 family. In terms of assembly, forms a SNARE complex with STX7, STX8 and VAMP8 which functions in the homotypic fusion of late endosomes. Component of the SNARE complex composed of STX7, STX8, VAMP7 and VIT1B that is required for heterotypic fusion of late endosomes with lysosomes. May interact with STX17. Interacts with CLINT1. As to expression, expressed in all tissues examined.

The protein localises to the early endosome membrane. It localises to the late endosome membrane. The protein resides in the lysosome membrane. It is found in the cytoplasmic granule. Its subcellular location is the recycling endosome membrane. V-SNARE that mediates vesicle transport pathways through interactions with t-SNAREs on the target membrane. These interactions are proposed to mediate aspects of the specificity of vesicle trafficking and to promote fusion of the lipid bilayers. May be concerned with increased secretion of cytokines associated with cellular senescence. In Homo sapiens (Human), this protein is Vesicle transport through interaction with t-SNAREs homolog 1B (VTI1B).